A 503-amino-acid chain; its full sequence is Probable cytosol aminopeptidase (503 aa).

Mn(2+) contacts are provided by Lys-270 and Asp-275. Residue Lys-282 is part of the active site. Positions 293, 352, and 354 each coordinate Mn(2+). Arg-356 is an active-site residue.

It belongs to the peptidase M17 family. Mn(2+) serves as cofactor.

The protein resides in the cytoplasm. The catalysed reaction is Release of an N-terminal amino acid, Xaa-|-Yaa-, in which Xaa is preferably Leu, but may be other amino acids including Pro although not Arg or Lys, and Yaa may be Pro. Amino acid amides and methyl esters are also readily hydrolyzed, but rates on arylamides are exceedingly low.. The enzyme catalyses Release of an N-terminal amino acid, preferentially leucine, but not glutamic or aspartic acids.. In terms of biological role, presumably involved in the processing and regular turnover of intracellular proteins. Catalyzes the removal of unsubstituted N-terminal amino acids from various peptides. In Shigella boydii serotype 4 (strain Sb227), this protein is Probable cytosol aminopeptidase.